A 153-amino-acid polypeptide reads, in one-letter code: Aspartate carbamoyltransferase regulatory chain (153 aa).

Zn(2+)-binding residues include Cys109, Cys114, Cys138, and Cys141.

It belongs to the PyrI family. Contains catalytic and regulatory chains. Requires Zn(2+) as cofactor.

Functionally, involved in allosteric regulation of aspartate carbamoyltransferase. In Shigella dysenteriae serotype 1 (strain Sd197), this protein is Aspartate carbamoyltransferase regulatory chain.